The following is a 151-amino-acid chain: Phosphopantetheine adenylyltransferase (151 aa).

Position 9 (S9) interacts with substrate. ATP contacts are provided by residues 9-10 (SF) and H17. Substrate is bound by residues K41, T73, and R87. ATP-binding positions include 88-90 (GLR), E98, and 122-128 (KAHISST).

This sequence belongs to the bacterial CoaD family. Homohexamer. Mg(2+) is required as a cofactor.

The protein resides in the cytoplasm. It carries out the reaction (R)-4'-phosphopantetheine + ATP + H(+) = 3'-dephospho-CoA + diphosphate. It functions in the pathway cofactor biosynthesis; coenzyme A biosynthesis; CoA from (R)-pantothenate: step 4/5. In terms of biological role, reversibly transfers an adenylyl group from ATP to 4'-phosphopantetheine, yielding dephospho-CoA (dPCoA) and pyrophosphate. In Christiangramia forsetii (strain DSM 17595 / CGMCC 1.15422 / KT0803) (Gramella forsetii), this protein is Phosphopantetheine adenylyltransferase.